A 376-amino-acid polypeptide reads, in one-letter code: Multiphosphoryl transfer protein (376 aa).

A PTS EIIA type-2 domain is found at 2–142 (FQLSVQDIHP…EELRALLMGE (141 aa)). H62 functions as the Tele-phosphohistidine intermediate; for EIIA activity in the catalytic mechanism. H62 carries the phosphohistidine; by HPr modification. Residues 156 to 284 (TLDIVASDLL…LTSDDAPTDD (129 aa)) are m domain. In terms of domain architecture, HPr spans 285–375 (VLSAEFVVRN…DAIAAGLGEG (91 aa)). H299 (pros-phosphohistidine intermediate; for HPr activity) is an active-site residue. H299 is subject to Phosphohistidine; by EI.

It localises to the cytoplasm. In terms of biological role, the phosphoenolpyruvate-dependent sugar phosphotransferase system (sugar PTS), a major carbohydrate active transport system, catalyzes the phosphorylation of incoming sugar substrates concomitantly with their translocation across the cell membrane. The enzyme II FruAB PTS system is involved in fructose transport. The polypeptide is Multiphosphoryl transfer protein (Escherichia coli O157:H7).